We begin with the raw amino-acid sequence, 398 residues long: Vacuolar protease A (398 aa).

The N-terminal stretch at 1-18 (MKSTSLLTASVLLGSASA) is a signal peptide. A propeptide spans 19-70 (AVHKLKLNKVPLDEQLYTHNIDAHVRALGQKYMGIRPNVHQELLEENSLNDM) (activation peptide). In terms of domain architecture, Peptidase A1 spans 85-395 (YFSEISLGTP…DLGNNAVGLA (311 aa)). The active site involves aspartate 103. Residues cysteine 116 and cysteine 121 are joined by a disulfide bond. Residue asparagine 138 is glycosylated (N-linked (GlcNAc...) asparagine). Aspartate 287 is a catalytic residue. Cysteine 321 and cysteine 354 are disulfide-bonded. An N-linked (GlcNAc...) asparagine glycan is attached at asparagine 338.

Belongs to the peptidase A1 family.

Its subcellular location is the vacuole lumen. It localises to the secreted. It carries out the reaction Hydrolysis of proteins with broad specificity for peptide bonds. Cleaves -Leu-Leu-|-Val-Tyr- bond in a synthetic substrate. Does not act on esters of Tyr or Arg.. Functionally, vacuolar aspartic endopeptidase which is probably also secreted and contributes to virulence. The polypeptide is Vacuolar protease A (pep2) (Aspergillus fumigatus (strain ATCC MYA-4609 / CBS 101355 / FGSC A1100 / Af293) (Neosartorya fumigata)).